Reading from the N-terminus, the 469-residue chain is GTPase Der (469 aa).

2 EngA-type G domains span residues 3 to 166 (PVIA…PEDE) and 177 to 350 (LRLA…ESAN). Residues 9-16 (GRPNVGKS), 56-60 (DTGGI), 118-121 (NKVD), 183-190 (GRPNVGKS), 230-234 (DTAGV), and 295-298 (NKWD) each bind GTP. The region spanning 351–435 (LKVSPAKLTQ…PVKIEFKTSE (85 aa)) is the KH-like domain.

The protein belongs to the TRAFAC class TrmE-Era-EngA-EngB-Septin-like GTPase superfamily. EngA (Der) GTPase family. In terms of assembly, associates with the 50S ribosomal subunit.

In terms of biological role, GTPase that plays an essential role in the late steps of ribosome biogenesis. The chain is GTPase Der from Acinetobacter baumannii (strain SDF).